A 312-amino-acid chain; its full sequence is Coproporphyrin III ferrochelatase (312 aa).

Fe-coproporphyrin III contacts are provided by residues Y13, R30, 46–47 (RY), S54, and Y125. Positions 183 and 264 each coordinate Fe(2+).

It belongs to the ferrochelatase family.

The protein resides in the cytoplasm. The catalysed reaction is Fe-coproporphyrin III + 2 H(+) = coproporphyrin III + Fe(2+). The protein operates within porphyrin-containing compound metabolism; protoheme biosynthesis. Involved in coproporphyrin-dependent heme b biosynthesis. Catalyzes the insertion of ferrous iron into coproporphyrin III to form Fe-coproporphyrin III. The chain is Coproporphyrin III ferrochelatase from Bacillus pumilus (strain SAFR-032).